The sequence spans 109 residues: Nucleoid-associated protein BCE_0021 (109 aa).

This sequence belongs to the YbaB/EbfC family. As to quaternary structure, homodimer.

The protein localises to the cytoplasm. It localises to the nucleoid. Its function is as follows. Binds to DNA and alters its conformation. May be involved in regulation of gene expression, nucleoid organization and DNA protection. This Bacillus cereus (strain ATCC 10987 / NRS 248) protein is Nucleoid-associated protein BCE_0021.